The sequence spans 203 residues: Kunitz trypsin inhibitor 6 (203 aa).

Residues 1–21 (MKTFQLMMISFLFVAITTTSG) form the signal peptide. Cysteine 70 and cysteine 115 are joined by a disulfide. 5 N-linked (GlcNAc...) asparagine glycosylation sites follow: asparagine 94, asparagine 127, asparagine 136, asparagine 144, and asparagine 197.

It belongs to the protease inhibitor I3 (leguminous Kunitz-type inhibitor) family.

In terms of biological role, exhibits Kunitz trypsin protease inhibitor activity. The protein is Kunitz trypsin inhibitor 6 of Arabidopsis thaliana (Mouse-ear cress).